Here is a 190-residue protein sequence, read N- to C-terminus: Iron-sulfur assembly protein 1 (190 aa).

Residues 49 to 71 (PSLKPSAAGSGSTAPKPVTEREI) are disordered. Residues Cys116, Cys180, and Cys182 each contribute to the Fe cation site.

This sequence belongs to the HesB/IscA family.

It localises to the mitochondrion matrix. In terms of biological role, involved in the assembly of mitochondrial and cytoplasmic iron-sulfur proteins. Probably involved in the binding of an intermediate of Fe/S cluster assembly. The protein is Iron-sulfur assembly protein 1 (isa1) of Schizosaccharomyces pombe (strain 972 / ATCC 24843) (Fission yeast).